A 253-amino-acid chain; its full sequence is 3-dehydroquinate dehydratase (253 aa).

Residues 46 to 48 (EFR) and Arg-82 contribute to the 3-dehydroquinate site. The active-site Proton donor/acceptor is the His-143. Catalysis depends on Lys-170, which acts as the Schiff-base intermediate with substrate. Residues Arg-213, Ser-232, and Gln-236 each coordinate 3-dehydroquinate.

It belongs to the type-I 3-dehydroquinase family. Homodimer.

It catalyses the reaction 3-dehydroquinate = 3-dehydroshikimate + H2O. It functions in the pathway metabolic intermediate biosynthesis; chorismate biosynthesis; chorismate from D-erythrose 4-phosphate and phosphoenolpyruvate: step 3/7. Functionally, involved in the third step of the chorismate pathway, which leads to the biosynthesis of aromatic amino acids. Catalyzes the cis-dehydration of 3-dehydroquinate (DHQ) and introduces the first double bond of the aromatic ring to yield 3-dehydroshikimate. This is 3-dehydroquinate dehydratase from Clostridium novyi (strain NT).